The chain runs to 33 residues: Cytochrome b6-f complex subunit 8 (33 aa).

A helical membrane pass occupies residues 2–22 (LFTFAWASLAAIFTFSIAMVV).

It belongs to the PetN family. The 4 large subunits of the cytochrome b6-f complex are cytochrome b6, subunit IV (17 kDa polypeptide, PetD), cytochrome f and the Rieske protein, while the 4 small subunits are PetG, PetL, PetM and PetN. The complex functions as a dimer.

Its subcellular location is the cellular thylakoid membrane. Its function is as follows. Component of the cytochrome b6-f complex, which mediates electron transfer between photosystem II (PSII) and photosystem I (PSI), cyclic electron flow around PSI, and state transitions. The protein is Cytochrome b6-f complex subunit 8 of Prochlorococcus marinus (strain MIT 9211).